The sequence spans 396 residues: Anhydro-N-acetylmuramic acid kinase (396 aa).

Gly-19–Asp-26 is an ATP binding site.

This sequence belongs to the anhydro-N-acetylmuramic acid kinase family.

It carries out the reaction 1,6-anhydro-N-acetyl-beta-muramate + ATP + H2O = N-acetyl-D-muramate 6-phosphate + ADP + H(+). The protein operates within amino-sugar metabolism; 1,6-anhydro-N-acetylmuramate degradation. It participates in cell wall biogenesis; peptidoglycan recycling. Its function is as follows. Catalyzes the specific phosphorylation of 1,6-anhydro-N-acetylmuramic acid (anhMurNAc) with the simultaneous cleavage of the 1,6-anhydro ring, generating MurNAc-6-P. Is required for the utilization of anhMurNAc either imported from the medium or derived from its own cell wall murein, and thus plays a role in cell wall recycling. In Colwellia psychrerythraea (strain 34H / ATCC BAA-681) (Vibrio psychroerythus), this protein is Anhydro-N-acetylmuramic acid kinase.